The primary structure comprises 533 residues: NEDD8-activating enzyme E1 regulatory subunit (533 aa).

Residues 330–343 (DMIADSDKFIKLQN) form an interaction with uba3 region.

This sequence belongs to the ubiquitin-activating E1 family. ULA1 subfamily. As to quaternary structure, heterodimer of uba3 and nae1. The complex binds nedd8 and ube2m.

The protein operates within protein modification; protein neddylation. Functionally, regulatory subunit of the dimeric uba3-nae1 E1 enzyme. E1 activates nedd8 by first adenylating its C-terminal glycine residue with ATP, thereafter linking this residue to the side chain of the catalytic cysteine, yielding a nedd8-uba3 thioester and free AMP. E1 finally transfers nedd8 to the catalytic cysteine of ube2m. The covalent attachment of nedd8 to target proteins is known as 'neddylation' and the process is involved in the regulation of cell growth, viability and development. This is NEDD8-activating enzyme E1 regulatory subunit (nae1) from Danio rerio (Zebrafish).